The chain runs to 204 residues: Histone chaperone ASF1A (204 aa).

The segment at 1-156 (MAKVQVNNVV…TRFHINWEDN (156 aa)) is interaction with histone H3, CHAF1B, and HIRA. Positions 31 to 37 (IEDLSED) match the Required for interaction with HIRA motif. The interval 155–204 (DNTEKLEDAESSNPNLQSLLSTDALPSASKGWSTSENSLNVMLESHMDCM) is required for interaction with HIRA. S192 carries the post-translational modification Phosphoserine.

The protein belongs to the ASF1 family. As to quaternary structure, interacts with histone H3 (via C-terminus), including histone H3.1, H3.2 and H3.3, and histone H4; the interaction with H3 is direct. Probably interacts with the heterodimeric form of H3-H4 taking the place of the second dimer. Interacts with the CHAF1A, CHAF1B and RBBP4 subunits of the CAF-1 complex. Interacts with CABIN1, HAT1, HIRA, NASP, TAF1 and UBN1. Found in a soluble complex with NASP and histones H3 and H4; the interaction with NASP is probably indirect and mediated by H3-H4. Interacts with CDAN1. Found in a cytosolic complex with IPO4 and histones H3 and H4. Interacts with CREBBP. In terms of processing, phosphorylated by TLK1 and TLK2. Highly phosphorylated in S-phase and at lower levels in M-phase. TLK2-mediated phosphorylation at Ser-192 prevents proteasome-dependent degradation. Phosphorylation at Ser-192 by PRKDC in response to DNA damage promotes the histone chaperone activity and ability to replace histones at double-strand breaks (DSBs) at stalled or collapsed replication forks, leading to RAD51 recruitment.

Its subcellular location is the nucleus. The protein localises to the chromosome. Its function is as follows. Histone chaperone that facilitates histone deposition and histone exchange and removal during nucleosome assembly and disassembly. Cooperates with chromatin assembly factor 1 (CAF-1) to promote replication-dependent chromatin assembly and with HIRA to promote replication-independent chromatin assembly. Promotes homologous recombination-mediated repair of double-strand breaks (DSBs) at stalled or collapsed replication forks: acts by mediating histone replacement at DSBs, leading to recruitment of the MMS22L-TONSL complex and subsequent loading of RAD51. Also involved in the nuclear import of the histone H3-H4 dimer together with importin-4 (IPO4): specifically recognizes and binds newly synthesized histones with the monomethylation of H3 'Lys-9' and acetylation at 'Lys-14' (H3K9me1K14ac) marks, and diacetylation at 'Lys-5' and 'Lys-12' of H4 (H4K5K12ac) marks in the cytosol. Required for the formation of senescence-associated heterochromatin foci (SAHF) and efficient senescence-associated cell cycle exit. This chain is Histone chaperone ASF1A, found in Mus musculus (Mouse).